Here is a 44-residue protein sequence, read N- to C-terminus: MLPDPEDPESKKATRRAGNLIICFLFIFFLFVTFIVPTLRHLLS.

Residues methionine 1–arginine 16 lie on the Intravirion side of the membrane. A helical; Signal-anchor for type II membrane protein transmembrane segment spans residues alanine 17 to proline 37. Topologically, residues threonine 38–serine 44 are virion surface.

The protein belongs to the rubulavirus small hydrophobic protein family.

Its subcellular location is the virion membrane. The protein localises to the host cell membrane. Inhibits TNF-alpha signaling and seems to block apoptosis in host infected cells. This chain is Small hydrophobic protein (SH), found in Parainfluenza virus 5 (strain W3) (PIV5).